The primary structure comprises 456 residues: Argininosuccinate lyase (456 aa).

The protein belongs to the lyase 1 family. Argininosuccinate lyase subfamily.

The protein resides in the cytoplasm. It catalyses the reaction 2-(N(omega)-L-arginino)succinate = fumarate + L-arginine. The protein operates within amino-acid biosynthesis; L-arginine biosynthesis; L-arginine from L-ornithine and carbamoyl phosphate: step 3/3. The chain is Argininosuccinate lyase from Listeria monocytogenes serotype 4b (strain F2365).